Here is a 287-residue protein sequence, read N- to C-terminus: MHLQGTNTYLVGTGKSRILIDTAQKNCKLANQYQKGLPVWINRISSFLYTHKIELSYVLLTHWHGDHTGGVPDLISRNSSLADKIYKNRPDSGQNPITHGQIFSVDGATVRAIFTPGHSVDHMCFLLEEENALFTGDNVLGHGFSVAQDLGRYMDSLRDMASLGCRIGYPAHGAVIEYLPGKLEEYIQHREGRERMMLSALTRQRVRGEGVREEGVKCGLTLNEIVMAIYGKLPPEVIEKALAPSLLQVLWKLTEDRMVGFKPGDPLKRQWFALEQRKRNKVRGCPS.

Positions 62, 64, 66, and 67 each coordinate Zn(2+). The active-site Proton donor/acceptor is aspartate 66.

It belongs to the metallo-beta-lactamase superfamily. Zn(2+) serves as cofactor.

The protein operates within secondary metabolite biosynthesis. In terms of biological role, lactamase-like protein; part of the gene cluster that mediates the biosynthesis of neosartoricin B, a prenylated anthracenone that probably exhibits T-cell antiproliferative activity, suggestive of a physiological role as an immunosuppressive agent. The non-reducing polyketide synthase nscA probably synthesizes and cyclizes the decaketide backbone. The hydrolase nscB then mediates the product release through hydrolysis followed by spontaneous decarboxylation. The prenyltransferase nscD catalyzes the addition of the dimethylallyl group to the aromatic C5. The FAD-dependent monooxygenase nscC is then responsible for the stereospecific hydroxylation at C2. Neosartoricin B can be converted into two additional compounds neosartoricins C and D. Neosartoricin C is a spirocyclic compound that is cyclized through the attack of C3 hydroxyl on C14, followed by dehydration. On the other hand, neosartoricin D is a further cyclized compound in which attack of C2 on C14 in neosartoricin C results in the formation of the acetal-containing dioxabicyclo-octanone ring. Both of these compounds are novel and possibly represent related metabolites of the gene cluster. In Trichophyton verrucosum (strain HKI 0517), this protein is Lactamase-like protein nscB.